We begin with the raw amino-acid sequence, 1025 residues long: Presequence protease, mitochondrial (1025 aa).

H90 is a Zn(2+) binding site. Residue E93 is the Proton acceptor of the active site. H94 contributes to the Zn(2+) binding site. Residue E166 is part of the active site. E197 is a binding site for Zn(2+).

This sequence belongs to the peptidase M16 family. PreP subfamily. As to quaternary structure, monomer and homodimer; homodimerization is induced by binding of the substrate. It depends on Zn(2+) as a cofactor.

Its subcellular location is the mitochondrion intermembrane space. The protein localises to the mitochondrion matrix. Degrades mitochondrial transit peptides after their cleavage in the intermembrane space or in the matrix, and presequence peptides; clearance of these peptides is required to keep the presequence processing machinery running. Preferentially cleaves the N-terminal side of paired basic amino acid residues. Also degrades other unstructured peptides. May function as an ATP-dependent peptidase as opposed to a metalloendopeptidase. This Aspergillus oryzae (strain ATCC 42149 / RIB 40) (Yellow koji mold) protein is Presequence protease, mitochondrial (cym1).